Here is a 331-residue protein sequence, read N- to C-terminus: DNA-directed RNA polymerase subunit alpha (331 aa).

The alpha N-terminal domain (alpha-NTD) stretch occupies residues Met-1 to Leu-242. Positions Val-258–Asn-331 are alpha C-terminal domain (alpha-CTD).

This sequence belongs to the RNA polymerase alpha chain family. In terms of assembly, homodimer. The RNAP catalytic core consists of 2 alpha, 1 beta, 1 beta' and 1 omega subunit. When a sigma factor is associated with the core the holoenzyme is formed, which can initiate transcription.

The enzyme catalyses RNA(n) + a ribonucleoside 5'-triphosphate = RNA(n+1) + diphosphate. In terms of biological role, DNA-dependent RNA polymerase catalyzes the transcription of DNA into RNA using the four ribonucleoside triphosphates as substrates. In Malacoplasma penetrans (strain HF-2) (Mycoplasma penetrans), this protein is DNA-directed RNA polymerase subunit alpha.